Consider the following 258-residue polypeptide: 4,5-dihydroxyphthalate decarboxylase (258 aa).

To P.testosteroni DHP decarboxylase.

The catalysed reaction is 4,5-dihydroxyphthalate + H(+) = 3,4-dihydroxybenzoate + CO2. Its pathway is xenobiotic degradation; phthalate degradation; 3,4-dihydroxybenzoate from phthalate: step 3/3. The chain is 4,5-dihydroxyphthalate decarboxylase (pht5) from Pseudomonas putida (Arthrobacter siderocapsulatus).